The following is a 184-amino-acid chain: Inorganic pyrophosphatase (184 aa).

Substrate-binding residues include Lys19, Arg33, and Tyr45. Asp55, Asp60, and Asp92 together coordinate Mg(2+). Tyr129 lines the substrate pocket.

The protein belongs to the PPase family. Homohexamer. It depends on Mg(2+) as a cofactor.

It is found in the cytoplasm. It carries out the reaction diphosphate + H2O = 2 phosphate + H(+). Its function is as follows. Catalyzes the hydrolysis of inorganic pyrophosphate (PPi) forming two phosphate ions. The protein is Inorganic pyrophosphatase of Mycoplasma genitalium (strain ATCC 33530 / DSM 19775 / NCTC 10195 / G37) (Mycoplasmoides genitalium).